Here is a 1070-residue protein sequence, read N- to C-terminus: DNA-directed RNA polymerase subunit beta (1070 aa).

This sequence belongs to the RNA polymerase beta chain family. In terms of assembly, in plastids the minimal PEP RNA polymerase catalytic core is composed of four subunits: alpha, beta, beta', and beta''. When a (nuclear-encoded) sigma factor is associated with the core the holoenzyme is formed, which can initiate transcription.

It is found in the plastid. Its subcellular location is the chloroplast. The catalysed reaction is RNA(n) + a ribonucleoside 5'-triphosphate = RNA(n+1) + diphosphate. DNA-dependent RNA polymerase catalyzes the transcription of DNA into RNA using the four ribonucleoside triphosphates as substrates. The polypeptide is DNA-directed RNA polymerase subunit beta (Solanum lycopersicum (Tomato)).